A 341-amino-acid polypeptide reads, in one-letter code: Glycerol-3-phosphate dehydrogenase [NAD(P)+] (341 aa).

Residues Ser-15, Trp-16, Arg-36, and Lys-110 each coordinate NADPH. Residues Lys-110, Gly-139, and Ser-141 each coordinate sn-glycerol 3-phosphate. Residue Ala-143 participates in NADPH binding. Residues Lys-194, Asp-247, Ser-257, Arg-258, and Asn-259 each coordinate sn-glycerol 3-phosphate. Lys-194 serves as the catalytic Proton acceptor. Arg-258 contributes to the NADPH binding site. Residues Val-282 and Glu-284 each coordinate NADPH.

It belongs to the NAD-dependent glycerol-3-phosphate dehydrogenase family.

The protein localises to the cytoplasm. It carries out the reaction sn-glycerol 3-phosphate + NAD(+) = dihydroxyacetone phosphate + NADH + H(+). It catalyses the reaction sn-glycerol 3-phosphate + NADP(+) = dihydroxyacetone phosphate + NADPH + H(+). It functions in the pathway membrane lipid metabolism; glycerophospholipid metabolism. Catalyzes the reduction of the glycolytic intermediate dihydroxyacetone phosphate (DHAP) to sn-glycerol 3-phosphate (G3P), the key precursor for phospholipid synthesis. This chain is Glycerol-3-phosphate dehydrogenase [NAD(P)+], found in Xanthomonas oryzae pv. oryzae (strain MAFF 311018).